The sequence spans 425 residues: WD repeat-containing protein jip5 (425 aa).

WD repeat units follow at residues 9-48, 72-111, 117-158, 221-262, and 318-355; these read PLSA…AASD, RHKG…VENK, EKNG…SKVS, ISST…DQDE, and DETE…ADRY. Residues 40 to 63 are disordered; the sequence is LPTDEAASDDDETSNASSRNGRGH. The interval 358–425 is disordered; that stretch reads MPGEKRMYGD…LDSMESSVVY (68 aa). Over residues 367–385 the composition is skewed to acidic residues; sequence DSDDSDEGDDSDDDSDDSD. Residues 395–404 show a composition bias toward basic residues; that stretch reads NKRKKTKAKG.

The protein belongs to the WD repeat WDR55 family.

It is found in the nucleus. The protein localises to the nucleolus. The sequence is that of WD repeat-containing protein jip5 (jip5) from Aspergillus niger (strain ATCC MYA-4892 / CBS 513.88 / FGSC A1513).